The sequence spans 714 residues: DNA ligase (714 aa).

NAD(+) contacts are provided by residues 47-51, 96-97, and glutamate 130; these read DAAYD and SL. Lysine 132 serves as the catalytic N6-AMP-lysine intermediate. 4 residues coordinate NAD(+): arginine 153, glutamate 190, lysine 306, and lysine 330. Cysteine 435, cysteine 438, cysteine 453, and cysteine 459 together coordinate Zn(2+). In terms of domain architecture, BRCT spans 636 to 714; sequence RNDSAVAGKT…EDEWLKLIEG (79 aa).

It belongs to the NAD-dependent DNA ligase family. LigA subfamily. Mg(2+) is required as a cofactor. Requires Mn(2+) as cofactor.

It catalyses the reaction NAD(+) + (deoxyribonucleotide)n-3'-hydroxyl + 5'-phospho-(deoxyribonucleotide)m = (deoxyribonucleotide)n+m + AMP + beta-nicotinamide D-nucleotide.. DNA ligase that catalyzes the formation of phosphodiester linkages between 5'-phosphoryl and 3'-hydroxyl groups in double-stranded DNA using NAD as a coenzyme and as the energy source for the reaction. It is essential for DNA replication and repair of damaged DNA. The polypeptide is DNA ligase (Nitrobacter hamburgensis (strain DSM 10229 / NCIMB 13809 / X14)).